Here is a 269-residue protein sequence, read N- to C-terminus: Growth-regulating factor 11 (269 aa).

The segment covering M1–S11 has biased composition (basic and acidic residues). The tract at residues M1–V71 is disordered. Gly residues predominate over residues G43–G52. Residues E58–E68 are compositionally biased toward acidic residues. A QLQ domain is found at A114–K149. The WRC domain occupies E180–E224. Short sequence motifs (bipartite nuclear localization signal) lie at residues R185–R195 and R213–R217. A disordered region spans residues H212–T269. Over residues E243 to S253 the composition is skewed to basic and acidic residues. Low complexity predominate over residues S255–T269.

This sequence belongs to the GRF family.

The protein localises to the nucleus. Its function is as follows. Transcription activator that plays a regulatory role in gibberellin-induced stem elongation. This Oryza sativa subsp. japonica (Rice) protein is Growth-regulating factor 11 (GRF11).